The sequence spans 402 residues: MKIAVAGSGYVGLSLGVLLSLQNEVTIVDILPSKVDKINNGLSPIQDEYIEYYLKSKQLSIKATLDSKAAYKEAELVIIATPTNYNSRINYFDTQHVETVIKEVLSVNSHATLIIKSTIPIGFITEMRQKFQTDRIIFSPEFLRESKALYDNLYPSRIIVSCEENDSPKVKADAEKFALLLKSAAKKNNVPVLIMGASEAEAVKLFANTYLALRVAYFNELDTYAESRKLNSHMIIQGISYDDRIGMHYNNPSFGYGGYCLPKDTKQLLANYNNIPQTLIEAIVSSNNVRKSYIAKQIINVLEERESPVKVVGVYRLIMKSNSDNFRESAIKDVIDILKSKDIKIIIYEPMLNKLESEDQSVLVNDLENFKKQANIIVTNRYDNELQDVKNKVYSRDIFNRD.

NAD(+)-binding positions include 2–19 (KIAVAGSGYVGLSLGVLL), Val-11, Asp-29, Lys-34, Thr-83, Thr-118, and Glu-145. Substrate-binding positions include 141–145 (EFLRE), Lys-204, Asn-208, 249–253 (YNNPS), and Gly-257. Tyr-259 contacts NAD(+). Cys-260 functions as the Nucleophile in the catalytic mechanism. Residue Lys-263 participates in NAD(+) binding. Residue Lys-320 coordinates substrate. Arg-327 provides a ligand contact to NAD(+).

Belongs to the UDP-glucose/GDP-mannose dehydrogenase family.

It carries out the reaction UDP-alpha-D-glucose + 2 NAD(+) + H2O = UDP-alpha-D-glucuronate + 2 NADH + 3 H(+). The protein operates within nucleotide-sugar biosynthesis; UDP-alpha-D-glucuronate biosynthesis; UDP-alpha-D-glucuronate from UDP-alpha-D-glucose: step 1/1. Catalyzes the formation of UDP-glucuronic acid which is required for capsular hyaluronic acid synthesis. The protein is UDP-glucose 6-dehydrogenase (hasB) of Streptococcus pyogenes serotype M1.